The sequence spans 395 residues: Cytoplasmic tRNA 2-thiolation protein 1 (395 aa).

Basic residues predominate over residues 297–309 (TVAYKNKNKNKKK). The disordered stretch occupies residues 297-335 (TVAYKNKNKNKKKSNSEQEEQEKQEQEVNPDGSISLNRN).

Belongs to the TtcA family. CTU1/NCS6/ATPBD3 subfamily.

It is found in the cytoplasm. Its pathway is tRNA modification; 5-methoxycarbonylmethyl-2-thiouridine-tRNA biosynthesis. In terms of biological role, plays a central role in 2-thiolation of mcm(5)S(2)U at tRNA wobble positions of tRNA(Lys), tRNA(Glu) and tRNA(Gln). Directly binds tRNAs and probably acts by catalyzing adenylation of tRNAs, an intermediate required for 2-thiolation. It is unclear whether it acts as a sulfurtransferase that transfers sulfur from thiocarboxylated URM1 onto the uridine of tRNAs at wobble position. Prior mcm(5) tRNA modification by the elongator complex is required for 2-thiolation. May also be involved in protein urmylation. The sequence is that of Cytoplasmic tRNA 2-thiolation protein 1 from Candida albicans (strain SC5314 / ATCC MYA-2876) (Yeast).